We begin with the raw amino-acid sequence, 404 residues long: LL-diaminopimelate aminotransferase (404 aa).

Residues Tyr15 and Gly42 each contribute to the substrate site. Pyridoxal 5'-phosphate-binding positions include Tyr72, 108-109 (AK), Tyr132, Asn188, Tyr219, and 247-249 (SFS). Lys109, Tyr132, and Asn188 together coordinate substrate. Lys250 carries the N6-(pyridoxal phosphate)lysine modification. The pyridoxal 5'-phosphate site is built by Arg258 and Asn288. Residues Asn288 and Arg384 each contribute to the substrate site.

It belongs to the class-I pyridoxal-phosphate-dependent aminotransferase family. LL-diaminopimelate aminotransferase subfamily. Homodimer. Pyridoxal 5'-phosphate is required as a cofactor.

The enzyme catalyses (2S,6S)-2,6-diaminopimelate + 2-oxoglutarate = (S)-2,3,4,5-tetrahydrodipicolinate + L-glutamate + H2O + H(+). It functions in the pathway amino-acid biosynthesis; L-lysine biosynthesis via DAP pathway; LL-2,6-diaminopimelate from (S)-tetrahydrodipicolinate (aminotransferase route): step 1/1. Its function is as follows. Involved in the synthesis of meso-diaminopimelate (m-DAP or DL-DAP), required for both lysine and peptidoglycan biosynthesis. Catalyzes the direct conversion of tetrahydrodipicolinate to LL-diaminopimelate. This chain is LL-diaminopimelate aminotransferase, found in Lachnoclostridium phytofermentans (strain ATCC 700394 / DSM 18823 / ISDg) (Clostridium phytofermentans).